A 355-amino-acid chain; its full sequence is U5 small nuclear ribonucleoprotein 40 kDa protein (355 aa).

WD repeat units lie at residues 60–99 (GHKG…INYS), 103–142 (GHKG…LIKR), 145–185 (EHSG…STHL), 187–226 (QHKY…DPLY), 230–269 (SHQD…PPNR), 280–319 (NFEK…LQYC), and 322–355 (GHSG…EIKP).

In terms of assembly, component of the pre-catalytic and catalytic spliceosome complexes. Component of the postcatalytic spliceosome P complex. Part of the U5 snRNP complex. Component of the U4/U6-U5 tri-snRNP complex.

It is found in the nucleus. Required for pre-mRNA splicing as component of the activated spliceosome. Component of the U5 small nuclear ribonucleoprotein (snRNP) complex and the U4/U6-U5 tri-snRNP complex, building blocks of the spliceosome. The polypeptide is U5 small nuclear ribonucleoprotein 40 kDa protein (snrnp40) (Dictyostelium discoideum (Social amoeba)).